The following is a 173-amino-acid chain: ATP-dependent protease subunit HslV (173 aa).

Thr-2 is a catalytic residue. Gly-158, Asp-161, and Thr-164 together coordinate Na(+).

It belongs to the peptidase T1B family. HslV subfamily. As to quaternary structure, a double ring-shaped homohexamer of HslV is capped on each side by a ring-shaped HslU homohexamer. The assembly of the HslU/HslV complex is dependent on binding of ATP.

It localises to the cytoplasm. It catalyses the reaction ATP-dependent cleavage of peptide bonds with broad specificity.. Its activity is regulated as follows. Allosterically activated by HslU binding. Protease subunit of a proteasome-like degradation complex believed to be a general protein degrading machinery. This chain is ATP-dependent protease subunit HslV, found in Actinobacillus succinogenes (strain ATCC 55618 / DSM 22257 / CCUG 43843 / 130Z).